Here is a 243-residue protein sequence, read N- to C-terminus: Segregation and condensation protein A (243 aa).

Belongs to the ScpA family. Component of a cohesin-like complex composed of ScpA, ScpB and the Smc homodimer, in which ScpA and ScpB bind to the head domain of Smc. The presence of the three proteins is required for the association of the complex with DNA.

Its subcellular location is the cytoplasm. Its function is as follows. Participates in chromosomal partition during cell division. May act via the formation of a condensin-like complex containing Smc and ScpB that pull DNA away from mid-cell into both cell halves. This is Segregation and condensation protein A from Staphylococcus haemolyticus (strain JCSC1435).